The chain runs to 473 residues: Laccase-3 (473 aa).

Positions 1–21 are cleaved as a signal peptide; that stretch reads MSFSSLRRALVFLGACSSALA. 2 consecutive Plastocyanin-like domains span residues 23-148 and 160-298; these read IGPV…LVIY and VDDE…ILRY. Residue N75 is glycosylated (N-linked (GlcNAc...) asparagine). Cu cation-binding residues include H85, H87, H130, and H132. Disulfide bonds link C106/C462 and C138/C221. 6 N-linked (GlcNAc...) asparagine glycosylation sites follow: N226, N283, N309, N346, N350, and N374. A Plastocyanin-like 3 domain is found at 365 to 444; sequence TVPVLLQILN…AGLAIVFAED (80 aa). Residues H410, H413, H415, H426, C427, H428, and H432 each contribute to the Cu cation site. N-linked (GlcNAc...) asparagine glycosylation is present at N470.

This sequence belongs to the multicopper oxidase family. In terms of assembly, homodimer. It depends on Cu cation as a cofactor.

It is found in the secreted. It carries out the reaction 4 hydroquinone + O2 = 4 benzosemiquinone + 2 H2O. Its function is as follows. Lignin degradation and detoxification of lignin-derived products. In Trametes villosa (White-rot fungus), this protein is Laccase-3 (LCC3).